The primary structure comprises 129 residues: Small ribosomal subunit protein uS8 (129 aa).

The protein belongs to the universal ribosomal protein uS8 family. In terms of assembly, part of the 30S ribosomal subunit. Contacts proteins S5 and S12.

Its function is as follows. One of the primary rRNA binding proteins, it binds directly to 16S rRNA central domain where it helps coordinate assembly of the platform of the 30S subunit. This Mesoplasma florum (strain ATCC 33453 / NBRC 100688 / NCTC 11704 / L1) (Acholeplasma florum) protein is Small ribosomal subunit protein uS8.